Here is a 299-residue protein sequence, read N- to C-terminus: ATP phosphoribosyltransferase (299 aa).

The protein belongs to the ATP phosphoribosyltransferase family. Long subfamily. Requires Mg(2+) as cofactor.

Its subcellular location is the cytoplasm. The catalysed reaction is 1-(5-phospho-beta-D-ribosyl)-ATP + diphosphate = 5-phospho-alpha-D-ribose 1-diphosphate + ATP. It participates in amino-acid biosynthesis; L-histidine biosynthesis; L-histidine from 5-phospho-alpha-D-ribose 1-diphosphate: step 1/9. Feedback inhibited by histidine. In terms of biological role, catalyzes the condensation of ATP and 5-phosphoribose 1-diphosphate to form N'-(5'-phosphoribosyl)-ATP (PR-ATP). Has a crucial role in the pathway because the rate of histidine biosynthesis seems to be controlled primarily by regulation of HisG enzymatic activity. The protein is ATP phosphoribosyltransferase of Shewanella denitrificans (strain OS217 / ATCC BAA-1090 / DSM 15013).